Reading from the N-terminus, the 2032-residue chain is Cytoskeleton-associated protein 5 (2032 aa).

TOG stretches follow at residues 1–223, 268–502, and 588–817; these read MGDD…KLPT, YELL…LVHG, and SIEV…GQSP. N6-acetyllysine is present on lysine 48. HEAT repeat units follow at residues 159-197, 356-394, and 434-472; these read IISLKPIIKVLPKLFESRDKAVRDEAKLFAIEIYRWNRD, GQYAGHVVPTILEKFKEKKPQVVQALQEAIDAIFLTTTL, and KSLLKPFCAALLKHINDSAPEVRDAAFEALGTALKVVGE. Residues 501–579 are disordered; the sequence is HGKKSGLATE…GTKNKKGLET (79 aa). The stretch at 750 to 788 is one HEAT 4 repeat; sequence ELNVKAFISNVKTALAATNPAVRTSAITLLGVMYLYVGP. A disordered region spans residues 811–848; the sequence is KMQGQSPPAPTRGIAKHSTSATDEGEDGEEPGEGGNDV. Serine 816 is modified (phosphoserine). Residues 833 to 842 show a composition bias toward acidic residues; it reads DEGEDGEEPG. TOG regions lie at residues 853–1081 and 1193–1428; these read PRIE…ANMP and IEQL…KRPS. 3 HEAT repeats span residues 855–893, 936–974, and 1013–1051; these read IEISDKITSELVSKIGDKNWKIRKEGLDEVAGIINEAKF, RQHVKNLGIPVITVLGDSKNNVRAAALATVNAWAEQTGM, and PTDLILCVPHLYSCLKDRNGDVRKKAQDALPFFMMHLGY. The segment covering 1078 to 1095 has biased composition (low complexity); it reads ANMPSKPAAPAKAMSKPM. Residues 1078–1156 form a disordered region; it reads ANMPSKPAAP…KTTLKEDDDK (79 aa). HEAT repeat units follow at residues 1284–1322, 1324–1357, and 1361–1399; these read ENEASSFIPYLILKVGEPKDVIRKDVRAILNRMCLVYPA, KMFPFIMEGTKSKNSKQRAECLEELGCLIESYGM, and QPTPGKALKEIAIHIGDRDNAVRNAALNTIVTVYNVHGD. The segment at 1420–1459 is disordered; it reads IKRSAKRPSAAPVKQAEEKPQRTQNINSNANMLRKGPAED. Residues 1441–1450 show a composition bias toward polar residues; that stretch reads RTQNINSNAN. Serine 1469 bears the Phosphoserine mark. The tract at residues 1801–1822 is disordered; that stretch reads SMDQTGSKSDKETEKGASRIDE. Residues 1808–1822 show a composition bias toward basic and acidic residues; that stretch reads KSDKETEKGASRIDE. The residue at position 1861 (serine 1861) is a Phosphoserine. 2 disordered regions span residues 1893–1926 and 1948–2032; these read SKGRIPTSTGISPQMEVTCVPTPTSTVSSLGNTN and LDNT…SSRK. Residues 1909–1921 are compositionally biased toward low complexity; the sequence is VTCVPTPTSTVSS. Residues 1932–1957 form an interaction with TACC3 region; it reads PSVYLERLKILRQRCGLDNTKQDDRP. Residues 1972–1983 are compositionally biased toward polar residues; the sequence is ASSTDMLHSKLS. The span at 1984-1997 shows a compositional bias: basic and acidic residues; the sequence is QLRESREQHQHSDL. Low complexity predominate over residues 2002 to 2015; that stretch reads THSAGTMTSSSSTT. Positions 2018-2032 are enriched in basic and acidic residues; the sequence is DDLKKRLERIKSSRK.

It belongs to the TOG/XMAP215 family. In terms of assembly, interacts with TACC1. Interacts with HNRNPA2B1. Interacts with TACC3 independently of clathrin. Interacts with TACC3 and clathrin forming the TACC3/ch-TOG/clathrin complex located at spindle inter-microtubules bridges. Interacts with NDC80; indicative for an association with the NDC80 complex. Interacts with SLAIN2. Interacts with SLAIN1.

The protein resides in the cytoplasm. It localises to the cytoskeleton. It is found in the microtubule organizing center. The protein localises to the centrosome. Its subcellular location is the spindle pole. The protein resides in the spindle. It localises to the chromosome. It is found in the centromere. The protein localises to the kinetochore. Binds to the plus end of microtubules and regulates microtubule dynamics and microtubule organization. Acts as a processive microtubule polymerase. Promotes cytoplasmic microtubule nucleation and elongation. Plays a major role in organizing spindle poles. In spindle formation protects kinetochore microtubules from depolymerization by KIF2C and has an essential role in centrosomal microtubule assembly independently of KIF2C activity. Contributes to centrosome integrity. Acts as a component of the TACC3/ch-TOG/clathrin complex proposed to contribute to stabilization of kinetochore fibers of the mitotic spindle by acting as inter-microtubule bridge. The TACC3/ch-TOG/clathrin complex is required for the maintenance of kinetochore fiber tension. Enhances the strength of NDC80 complex-mediated kinetochore-tip microtubule attachments. The sequence is that of Cytoskeleton-associated protein 5 from Mus musculus (Mouse).